The sequence spans 229 residues: UPF0758 protein GSU0386 (229 aa).

The region spanning 107 to 229 is the MPN domain; sequence RFTSPEQVYN…FTSFVSAGLL (123 aa). 3 residues coordinate Zn(2+): histidine 178, histidine 180, and aspartate 191. The JAMM motif motif lies at 178–191; the sequence is HNHPTGDPAPSRED.

Belongs to the UPF0758 family.

The sequence is that of UPF0758 protein GSU0386 from Geobacter sulfurreducens (strain ATCC 51573 / DSM 12127 / PCA).